The sequence spans 235 residues: Ribitol-5-phosphate cytidylyltransferase (235 aa).

CTP contacts are provided by residues L7–G10, G82–S88, and S113.

The protein belongs to the IspD/TarI cytidylyltransferase family. TarI subfamily.

The enzyme catalyses D-ribitol 5-phosphate + CTP + H(+) = CDP-L-ribitol + diphosphate. It participates in cell wall biogenesis; poly(ribitol phosphate) teichoic acid biosynthesis. Functionally, catalyzes the transfer of the cytidylyl group of CTP to D-ribitol 5-phosphate. The chain is Ribitol-5-phosphate cytidylyltransferase from Streptococcus pneumoniae (strain Hungary19A-6).